Here is a 1031-residue protein sequence, read N- to C-terminus: Error-prone DNA polymerase (1031 aa).

This sequence belongs to the DNA polymerase type-C family. DnaE2 subfamily.

It is found in the cytoplasm. The enzyme catalyses DNA(n) + a 2'-deoxyribonucleoside 5'-triphosphate = DNA(n+1) + diphosphate. Functionally, DNA polymerase involved in damage-induced mutagenesis and translesion synthesis (TLS). It is not the major replicative DNA polymerase. The chain is Error-prone DNA polymerase from Pseudomonas syringae pv. syringae (strain B728a).